A 354-amino-acid chain; its full sequence is Methionine import ATP-binding protein MetN (354 aa).

The ABC transporter domain occupies 8–250; the sequence is LDHIDITFRQ…PKEALTQEFI (243 aa). Residue 42 to 49 participates in ATP binding; it reads GYSGAGKS.

This sequence belongs to the ABC transporter superfamily. Methionine importer (TC 3.A.1.24) family. In terms of assembly, the complex is composed of two ATP-binding proteins (MetN), two transmembrane proteins (MetI) and a solute-binding protein (MetQ).

It is found in the cell membrane. The catalysed reaction is L-methionine(out) + ATP + H2O = L-methionine(in) + ADP + phosphate + H(+). The enzyme catalyses D-methionine(out) + ATP + H2O = D-methionine(in) + ADP + phosphate + H(+). Its function is as follows. Part of the ABC transporter complex MetNIQ involved in methionine import. Responsible for energy coupling to the transport system. The sequence is that of Methionine import ATP-binding protein MetN from Streptococcus pyogenes serotype M1.